The sequence spans 166 residues: UBA-like domain-containing protein 2-A (166 aa).

Positions Gln-120–Arg-166 are disordered.

This sequence belongs to the UBALD family.

This is UBA-like domain-containing protein 2-A (ubald2-a) from Xenopus laevis (African clawed frog).